We begin with the raw amino-acid sequence, 190 residues long: Cypemycin cysteine dehydrogenase (decarboxylating) (190 aa).

It belongs to the HFCD (homooligomeric flavin containing Cys decarboxylase) superfamily.

The enzyme catalyses [cypemycin](1-18)-L-Cys-L-Leu-L-Val-L-Cys + A = C(3,19),S(21)-[cypemycin](1-18)-L-Ala-L-Leu-N-thioethenyl-L-valinamide + hydrogen sulfide + AH2 + CO2. Its function is as follows. Involved in the biosynthesis of the lanaridin cypemycin. In Streptomyces sp, this protein is Cypemycin cysteine dehydrogenase (decarboxylating).